Reading from the N-terminus, the 148-residue chain is 3-dehydroquinate dehydratase (148 aa).

The Proton acceptor role is filled by Y24. Substrate is bound by residues N75, H81, and D88. H101 (proton donor) is an active-site residue. Substrate-binding positions include 102–103 (LS) and R112.

The protein belongs to the type-II 3-dehydroquinase family. In terms of assembly, homododecamer.

It catalyses the reaction 3-dehydroquinate = 3-dehydroshikimate + H2O. The protein operates within metabolic intermediate biosynthesis; chorismate biosynthesis; chorismate from D-erythrose 4-phosphate and phosphoenolpyruvate: step 3/7. Functionally, catalyzes a trans-dehydration via an enolate intermediate. In Sinorhizobium medicae (strain WSM419) (Ensifer medicae), this protein is 3-dehydroquinate dehydratase.